Here is a 287-residue protein sequence, read N- to C-terminus: D-alanine--D-alanine ligase (287 aa).

The ATP-grasp domain maps to 98-283; that stretch reads KTKQIAQSVG…FDDVVRITVE (186 aa). 124–169 contacts ATP; the sequence is PVIIKPVDEGSSKGLFLCNNKEEAEEAVKKLAKPIIEDYIIGEELT. Residues Asp238, Glu250, and Asn252 each coordinate Mg(2+).

It belongs to the D-alanine--D-alanine ligase family. Requires Mg(2+) as cofactor. Mn(2+) is required as a cofactor.

Its subcellular location is the cytoplasm. It carries out the reaction 2 D-alanine + ATP = D-alanyl-D-alanine + ADP + phosphate + H(+). The protein operates within cell wall biogenesis; peptidoglycan biosynthesis. In terms of biological role, cell wall formation. This chain is D-alanine--D-alanine ligase, found in Fusobacterium nucleatum subsp. nucleatum (strain ATCC 25586 / DSM 15643 / BCRC 10681 / CIP 101130 / JCM 8532 / KCTC 2640 / LMG 13131 / VPI 4355).